Reading from the N-terminus, the 377-residue chain is MRPIHMAGEEDLQPINLKISIYLESLNTERPSRYMNLMKERLQKKMEQQVKKQKSKSRSKAKEILTNNSKIIATATSVPLTVGAYGILVGSATPFLASQTNSFIQSSVHRGFENLTGSGLMSTIMNPISNGLSSVLGNTAEAAITIATPIAVLYFVPTLFRLFFYVSKKMVHLLANLFDSTESHSLNSEYFESGLPLLTLLCNLSTLAIIDDLTLRLKAVGIEKISINLIKLKNKILNKENSNLNVEEKMLYDLAKKNSEKLIALALKIGEEKIFKRIQSLESVTSLKAQIQKFIPKVDMWANGKIDFWITVMGALIDKESVQARETFFNTLQSISTLKTPNAPNPHSLFQLDMEPRHKQREKFSPTDQPTYGRQAF.

2 helical membrane passes run Ile71–Ser91 and Ala140–Phe160.

The protein resides in the membrane. This is an uncharacterized protein from Coxiella burnetii (strain RSA 493 / Nine Mile phase I).